The following is a 343-amino-acid chain: Ornithine carbamoyltransferase (343 aa).

Carbamoyl phosphate contacts are provided by residues 62 to 65, Gln89, Arg113, and 140 to 143; these read STRT and HPTQ. Residues Asn172, Asp236, and 240 to 241 each bind L-ornithine; that span reads SM. Residues 278–279 and Arg323 each bind carbamoyl phosphate; that span reads CL.

It belongs to the aspartate/ornithine carbamoyltransferase superfamily. OTCase family.

It localises to the cytoplasm. It carries out the reaction carbamoyl phosphate + L-ornithine = L-citrulline + phosphate + H(+). It participates in amino-acid degradation; L-arginine degradation via ADI pathway; carbamoyl phosphate from L-arginine: step 2/2. In terms of biological role, reversibly catalyzes the transfer of the carbamoyl group from carbamoyl phosphate (CP) to the N(epsilon) atom of ornithine (ORN) to produce L-citrulline. This is Ornithine carbamoyltransferase from Levilactobacillus brevis (strain ATCC 367 / BCRC 12310 / CIP 105137 / JCM 1170 / LMG 11437 / NCIMB 947 / NCTC 947) (Lactobacillus brevis).